The following is a 1382-amino-acid chain: DNA-directed RNA polymerase subunit beta (1382 aa).

Belongs to the RNA polymerase beta chain family. The RNAP catalytic core consists of 2 alpha, 1 beta, 1 beta' and 1 omega subunit. When a sigma factor is associated with the core the holoenzyme is formed, which can initiate transcription.

The enzyme catalyses RNA(n) + a ribonucleoside 5'-triphosphate = RNA(n+1) + diphosphate. DNA-dependent RNA polymerase catalyzes the transcription of DNA into RNA using the four ribonucleoside triphosphates as substrates. The protein is DNA-directed RNA polymerase subunit beta of Anaplasma marginale (strain Florida).